A 285-amino-acid chain; its full sequence is tRNA-cytidine(32) 2-sulfurtransferase (285 aa).

The short motif at 48–53 (SGGKDS) is the PP-loop motif element. 3 residues coordinate [4Fe-4S] cluster: Cys-122, Cys-125, and Cys-213.

Belongs to the TtcA family. As to quaternary structure, homodimer. It depends on Mg(2+) as a cofactor. [4Fe-4S] cluster serves as cofactor.

It is found in the cytoplasm. It carries out the reaction cytidine(32) in tRNA + S-sulfanyl-L-cysteinyl-[cysteine desulfurase] + AH2 + ATP = 2-thiocytidine(32) in tRNA + L-cysteinyl-[cysteine desulfurase] + A + AMP + diphosphate + H(+). It functions in the pathway tRNA modification. Functionally, catalyzes the ATP-dependent 2-thiolation of cytidine in position 32 of tRNA, to form 2-thiocytidine (s(2)C32). The sulfur atoms are provided by the cysteine/cysteine desulfurase (IscS) system. The polypeptide is tRNA-cytidine(32) 2-sulfurtransferase (Cytophaga hutchinsonii (strain ATCC 33406 / DSM 1761 / CIP 103989 / NBRC 15051 / NCIMB 9469 / D465)).